The sequence spans 308 residues: Aspartate carbamoyltransferase catalytic subunit (308 aa).

2 residues coordinate carbamoyl phosphate: Arg-49 and Thr-50. Residue Lys-77 coordinates L-aspartate. 3 residues coordinate carbamoyl phosphate: Arg-99, His-127, and Gln-130. L-aspartate contacts are provided by Arg-160 and Arg-211. Carbamoyl phosphate-binding residues include Ala-252 and Pro-253.

The protein belongs to the aspartate/ornithine carbamoyltransferase superfamily. ATCase family. In terms of assembly, heterododecamer (2C3:3R2) of six catalytic PyrB chains organized as two trimers (C3), and six regulatory PyrI chains organized as three dimers (R2).

It catalyses the reaction carbamoyl phosphate + L-aspartate = N-carbamoyl-L-aspartate + phosphate + H(+). It functions in the pathway pyrimidine metabolism; UMP biosynthesis via de novo pathway; (S)-dihydroorotate from bicarbonate: step 2/3. Its function is as follows. Catalyzes the condensation of carbamoyl phosphate and aspartate to form carbamoyl aspartate and inorganic phosphate, the committed step in the de novo pyrimidine nucleotide biosynthesis pathway. The polypeptide is Aspartate carbamoyltransferase catalytic subunit (Bacillus caldolyticus).